Here is a 341-residue protein sequence, read N- to C-terminus: Biotin synthase (341 aa).

The Radical SAM core domain maps to 43-266; sequence SEIQLSQLLS…IAVARIVCPK (224 aa). [4Fe-4S] cluster-binding residues include cysteine 58, cysteine 62, and cysteine 65. Residues cysteine 102, cysteine 133, cysteine 193, and arginine 270 each coordinate [2Fe-2S] cluster.

It belongs to the radical SAM superfamily. Biotin synthase family. In terms of assembly, homodimer. [4Fe-4S] cluster serves as cofactor. [2Fe-2S] cluster is required as a cofactor.

The enzyme catalyses (4R,5S)-dethiobiotin + (sulfur carrier)-SH + 2 reduced [2Fe-2S]-[ferredoxin] + 2 S-adenosyl-L-methionine = (sulfur carrier)-H + biotin + 2 5'-deoxyadenosine + 2 L-methionine + 2 oxidized [2Fe-2S]-[ferredoxin]. It functions in the pathway cofactor biosynthesis; biotin biosynthesis; biotin from 7,8-diaminononanoate: step 2/2. Its function is as follows. Catalyzes the conversion of dethiobiotin (DTB) to biotin by the insertion of a sulfur atom into dethiobiotin via a radical-based mechanism. The protein is Biotin synthase of Caulobacter vibrioides (strain ATCC 19089 / CIP 103742 / CB 15) (Caulobacter crescentus).